A 280-amino-acid chain; its full sequence is MRFVRIAAAASGATVFMWAGFAGAASAASAVRLVPHRAIYDLTLDRADEKSGISGLTGRMVYEFNGSACEGYTTNFRFVTRVDMDEQPQRVTDQQTTTFEDADGKDFRFVNKTFVDKELVKEVRGDAKLEDGKTVVKLSKPKENTLDLKGTQFPTRHMEELIGKAEAGQKFYQTTLFDASEDADRVVATTVVVGKQQAVPDDETKVMGKFSKDQVWPVTIAYFDDKEQQDGMPIYRINFKLYRNGITRDLTMDYGDFSMRGKLVKLDIYDTGKNKTGCSK.

Residues 1 to 24 (MRFVRIAAAASGATVFMWAGFAGA) form the signal peptide. An intrachain disulfide couples Cys-69 to Cys-278.

Monomer.

It is found in the periplasm. Functions in the periplasm to maintain cell envelope integrity. This is Cell envelope integrity protein EipB from Brucella abortus (strain 2308).